The following is a 222-amino-acid chain: UPF0758 protein Lcho_0695 (222 aa).

The MPN domain occupies 100-222 (VFDSPQAVRD…VVSFAERGLL (123 aa)). The Zn(2+) site is built by H171, H173, and D184. A JAMM motif motif is present at residues 171–184 (HNHPSGVAEPSRAD).

This sequence belongs to the UPF0758 family.

The polypeptide is UPF0758 protein Lcho_0695 (Leptothrix cholodnii (strain ATCC 51168 / LMG 8142 / SP-6) (Leptothrix discophora (strain SP-6))).